Here is a 473-residue protein sequence, read N- to C-terminus: ATP synthase subunit beta (473 aa).

158-165 serves as a coordination point for ATP; it reads GGAGVGKT.

Belongs to the ATPase alpha/beta chains family. In terms of assembly, F-type ATPases have 2 components, CF(1) - the catalytic core - and CF(0) - the membrane proton channel. CF(1) has five subunits: alpha(3), beta(3), gamma(1), delta(1), epsilon(1). CF(0) has three main subunits: a(1), b(2) and c(9-12). The alpha and beta chains form an alternating ring which encloses part of the gamma chain. CF(1) is attached to CF(0) by a central stalk formed by the gamma and epsilon chains, while a peripheral stalk is formed by the delta and b chains.

Its subcellular location is the cell membrane. It catalyses the reaction ATP + H2O + 4 H(+)(in) = ADP + phosphate + 5 H(+)(out). Produces ATP from ADP in the presence of a proton gradient across the membrane. The catalytic sites are hosted primarily by the beta subunits. This chain is ATP synthase subunit beta, found in Bacillus pumilus (strain SAFR-032).